The primary structure comprises 638 residues: Epithelial sodium channel subunit beta (638 aa).

The Cytoplasmic segment spans residues 1 to 50 (MPVKKYLLKCLHRLQKGPGYTYKELLVWYCNNTNTHGPKRIICEGPKKKA). Residues 51 to 71 (MWFLLTLLFACLVCWQWGVFI) traverse the membrane as a helical segment. Topologically, residues 72-530 (QTYLSWEVSV…GGQFGFWMGG (459 aa)) are extracellular. 9 disulfides stabilise this stretch: Cys-98–Cys-270, Cys-182–Cys-187, Cys-194–Cys-201, Cys-247–Cys-254, Cys-359–Cys-446, Cys-384–Cys-442, Cys-388–Cys-438, Cys-397–Cys-424, and Cys-399–Cys-413. 2 N-linked (GlcNAc...) asparagine glycosylation sites follow: Asn-135 and Asn-141. Asn-205 is a glycosylation site (N-linked (GlcNAc...) asparagine). A helical membrane pass occupies residues 531-551 (SVLCLIEFGEIIIDFIWITII). Residues 552-638 (KLVASCKGLR…MESDSEVEAI (87 aa)) are Cytoplasmic-facing. The segment at 594–620 (SCRPHGEVYPDQQTLPIPGTPPPNYDS) is disordered. The PY motif; recruits WW domain-containing proteins and is thereby required for ubiquitination and inhibition of the channel by NEDD4 and NEDD4L motif lies at 614–618 (PPPNY). Residues Ser-631 and Ser-633 each carry the phosphoserine modification.

The protein belongs to the amiloride-sensitive sodium channel (TC 1.A.6) family. SCNN1B subfamily. Component of the heterotrimeric epithelial sodium channel (ENaC) composed of an alpha/SCNN1A, a beta/SCNN1B and a gamma/SCNN1G subunit. Interacts with WWP1 (via WW domains). Interacts with WWP2 (via WW domains); inhibits the channel. Interacts with the full-length immature form of PCSK9 (pro-PCSK9). Interacts (N-glycosylated) with BPIFA1; the interaction is direct and inhibits the proteolytic processing of SCNN1A and SCNN1G and the activation of ENaC. In terms of processing, ubiquitinated. Can be ubiquitinated at multiple sites and undergo monoubiquitination and polyubiquitination. Ubiquitination by NEDD4 or NEDD4L inhibits the ENaC channel through endocytosis, intracellular retention and degradation of its individual subunits. However, some studies could not confirm the ubiquitination of this subunit of the ENaC. N-glycosylated. N-glycosylation is required for interaction with BPIFA1. Post-translationally, phosphorylated on serine and threonine residues. Aldosterone and insulin increase the basal level of phosphorylation. In terms of tissue distribution, lung and kidney.

The protein resides in the apical cell membrane. The protein localises to the cytoplasmic vesicle membrane. It catalyses the reaction Na(+)(in) = Na(+)(out). With respect to regulation, originally identified and characterized by its inhibition by the diuretic drug amiloride. Its function is as follows. This is one of the three pore-forming subunits of the heterotrimeric epithelial sodium channel (ENaC), a critical regulator of sodium balance and fluid homeostasis. ENaC operates in epithelial tissues, where it mediates the electrodiffusion of sodium ions from extracellular fluid through the apical membrane of cells, with water following osmotically. It plays a key role in maintaining sodium homeostasis through electrogenic sodium reabsorption in the kidneys. This subunit is not essential for ENaC function in airway surface liquid homeostasis and proper mucus clearance. This is Epithelial sodium channel subunit beta from Mus musculus (Mouse).